A 350-amino-acid chain; its full sequence is tRNA uridine(34) hydroxylase (350 aa).

A Rhodanese domain is found at 146–240; sequence DDPDALFIDM…YARKAREQGL (95 aa). The Cysteine persulfide intermediate role is filled by cysteine 200.

Belongs to the TrhO family.

The enzyme catalyses uridine(34) in tRNA + AH2 + O2 = 5-hydroxyuridine(34) in tRNA + A + H2O. Its function is as follows. Catalyzes oxygen-dependent 5-hydroxyuridine (ho5U) modification at position 34 in tRNAs. In Shigella dysenteriae serotype 1 (strain Sd197), this protein is tRNA uridine(34) hydroxylase.